The sequence spans 216 residues: Probable GTP-binding protein EngB (216 aa).

An EngB-type G domain is found at 21-192 (DAPQIALAGR…WRELRALAAG (172 aa)). GTP-binding positions include 29–36 (GRSNVGKS), 56–60 (GKTRS), 75–78 (DLPG), 142–145 (TKGD), and 170–173 (VTAS). The Mg(2+) site is built by S36 and T58. Positions 195-216 (SADDEAEDAPSDTIDAIDDVTA) are disordered. Residues 196–216 (ADDEAEDAPSDTIDAIDDVTA) show a composition bias toward acidic residues.

This sequence belongs to the TRAFAC class TrmE-Era-EngA-EngB-Septin-like GTPase superfamily. EngB GTPase family. It depends on Mg(2+) as a cofactor.

Functionally, necessary for normal cell division and for the maintenance of normal septation. This Nitratidesulfovibrio vulgaris (strain DP4) (Desulfovibrio vulgaris) protein is Probable GTP-binding protein EngB.